A 254-amino-acid polypeptide reads, in one-letter code: Photosystem II 22 kDa protein 2, chloroplastic (254 aa).

Residues M1–V38 constitute a chloroplast transit peptide. Tandem repeats lie at residues F42 to D148 and A149 to D253. Transmembrane regions (helical) follow at residues V86 to L106, A120 to G140, L184 to T204, and P219 to I239.

It belongs to the ELIP/psbS family.

Its subcellular location is the plastid. It is found in the chloroplast thylakoid membrane. Its function is as follows. Involved in high light-mediated energy-dependent nonphotochemical quenching (NPQ, qE) and thermal dissipation (TD) thus regulating energy conversion in photosystem II and protecting from photoinhibition. Also seems to regulate quantum yield of electron transport in fluctuating light conditions. The polypeptide is Photosystem II 22 kDa protein 2, chloroplastic (Oryza sativa subsp. indica (Rice)).